The chain runs to 495 residues: UDP-N-acetylmuramoyl-L-alanyl-D-glutamate--2,6-diaminopimelate ligase (495 aa).

L32 and S34 together coordinate UDP-N-acetyl-alpha-D-muramoyl-L-alanyl-D-glutamate. An ATP-binding site is contributed by 119–125 (GTNGKTT). Residues N160, 161–162 (TT), S188, Q194, and R196 contribute to the UDP-N-acetyl-alpha-D-muramoyl-L-alanyl-D-glutamate site. K228 bears the N6-carboxylysine mark. Residues R390, 414–417 (DNPR), G465, and E469 contribute to the meso-2,6-diaminopimelate site. Residues 414–417 (DNPR) carry the Meso-diaminopimelate recognition motif motif.

It belongs to the MurCDEF family. MurE subfamily. Mg(2+) is required as a cofactor. In terms of processing, carboxylation is probably crucial for Mg(2+) binding and, consequently, for the gamma-phosphate positioning of ATP.

Its subcellular location is the cytoplasm. It catalyses the reaction UDP-N-acetyl-alpha-D-muramoyl-L-alanyl-D-glutamate + meso-2,6-diaminopimelate + ATP = UDP-N-acetyl-alpha-D-muramoyl-L-alanyl-gamma-D-glutamyl-meso-2,6-diaminopimelate + ADP + phosphate + H(+). It participates in cell wall biogenesis; peptidoglycan biosynthesis. Catalyzes the addition of meso-diaminopimelic acid to the nucleotide precursor UDP-N-acetylmuramoyl-L-alanyl-D-glutamate (UMAG) in the biosynthesis of bacterial cell-wall peptidoglycan. The protein is UDP-N-acetylmuramoyl-L-alanyl-D-glutamate--2,6-diaminopimelate ligase of Vibrio cholerae serotype O1 (strain ATCC 39315 / El Tor Inaba N16961).